A 110-amino-acid chain; its full sequence is Mite allergen Lep d 5 (110 aa).

It belongs to the mite group 5 allergen family.

This chain is Mite allergen Lep d 5, found in Lepidoglyphus destructor (Storage mite).